The following is a 97-amino-acid chain: UPF0250 protein RSc0326 (97 aa).

Belongs to the UPF0250 family.

The polypeptide is UPF0250 protein RSc0326 (Ralstonia nicotianae (strain ATCC BAA-1114 / GMI1000) (Ralstonia solanacearum)).